A 353-amino-acid polypeptide reads, in one-letter code: Photosystem II D2 protein (353 aa).

Thr2 bears the N-acetylthreonine mark. The residue at position 2 (Thr2) is a Phosphothreonine. The chain crosses the membrane as a helical span at residues 41–61 (CAYFALGGWFTGTTFVTSWYT). Residue His118 coordinates chlorophyll a. A helical membrane pass occupies residues 125-141 (GFMLRQFELARSVQLRP). Pheophytin a-binding residues include Gln130 and Asn143. Residues 153–166 (VFVSVFLIYPLGQS) form a helical membrane-spanning segment. Residue His198 participates in chlorophyll a binding. Residues 208 to 228 (AALLCAIHGATVENTLFEDGD) form a helical membrane-spanning segment. Residues His215 and Phe262 each coordinate a plastoquinone. His215 serves as a coordination point for Fe cation. Residue His269 participates in Fe cation binding. The chain crosses the membrane as a helical span at residues 279-295 (GLWMSALGVVGLALNLR).

Belongs to the reaction center PufL/M/PsbA/D family. PSII is composed of 1 copy each of membrane proteins PsbA, PsbB, PsbC, PsbD, PsbE, PsbF, PsbH, PsbI, PsbJ, PsbK, PsbL, PsbM, PsbT, PsbX, PsbY, PsbZ, Psb30/Ycf12, at least 3 peripheral proteins of the oxygen-evolving complex and a large number of cofactors. It forms dimeric complexes. The cofactor is The D1/D2 heterodimer binds P680, chlorophylls that are the primary electron donor of PSII, and subsequent electron acceptors. It shares a non-heme iron and each subunit binds pheophytin, quinone, additional chlorophylls, carotenoids and lipids. There is also a Cl(-1) ion associated with D1 and D2, which is required for oxygen evolution. The PSII complex binds additional chlorophylls, carotenoids and specific lipids..

It localises to the plastid. The protein localises to the chloroplast thylakoid membrane. The catalysed reaction is 2 a plastoquinone + 4 hnu + 2 H2O = 2 a plastoquinol + O2. Its function is as follows. Photosystem II (PSII) is a light-driven water:plastoquinone oxidoreductase that uses light energy to abstract electrons from H(2)O, generating O(2) and a proton gradient subsequently used for ATP formation. It consists of a core antenna complex that captures photons, and an electron transfer chain that converts photonic excitation into a charge separation. The D1/D2 (PsbA/PsbD) reaction center heterodimer binds P680, the primary electron donor of PSII as well as several subsequent electron acceptors. D2 is needed for assembly of a stable PSII complex. The polypeptide is Photosystem II D2 protein (Nymphaea alba (White water-lily)).